The sequence spans 447 residues: UPF0210 protein LEUM_1180 (447 aa).

Belongs to the UPF0210 family. As to quaternary structure, homodimer.

This chain is UPF0210 protein LEUM_1180, found in Leuconostoc mesenteroides subsp. mesenteroides (strain ATCC 8293 / DSM 20343 / BCRC 11652 / CCM 1803 / JCM 6124 / NCDO 523 / NBRC 100496 / NCIMB 8023 / NCTC 12954 / NRRL B-1118 / 37Y).